The following is a 622-amino-acid chain: Palmitoyltransferase ZDHHC13 (622 aa).

The residue at position 1 (Met1) is an N-acetylmethionine. Over 1 to 291 (MEGPGLGSQC…RLWRWLQKCE (291 aa)) the chain is Cytoplasmic. ANK repeat units follow at residues 43–78 (PLIE…VRQP), 81–110 (ENVS…VVDQ), 115–144 (LNST…DPTL), 148–177 (EGFS…SVNM), 181–211 (NGQT…SLNV), 216–245 (HQNT…SLDI), and 249–277 (KGET…KMRA). Residues 292–312 (LFLLLMLSVITMWAVGYILDF) form a helical membrane-spanning segment. The Lumenal portion of the chain corresponds to 313–320 (NSDSWLLK). The helical transmembrane segment at 321–341 (GCLLVTLFFLTSLFPRFLVGY) threads the bilayer. The Cytoplasmic segment spans residues 342-347 (KNLVYL). The helical transmembrane segment at 348–368 (PTAFLLSSVFWIFMTWFILFF) threads the bilayer. The Lumenal portion of the chain corresponds to 369–370 (PD). A helical transmembrane segment spans residues 371-391 (LAGAPFYFSFIFSIVAFLYFF). At 392–470 (YKTWATDPGF…RCIGFGNHHY (79 aa)) the chain is on the cytoplasmic side. The DHHC domain maps to 426–476 (TFCTSCLIRKPLRSLHCHVCNSCVARYDQHCLWTGRCIGFGNHHYYIFFLF). The S-palmitoyl cysteine intermediate role is filled by Cys456. A helical transmembrane segment spans residues 471-491 (YIFFLFFLSMVCGWIIYGSFI). The Lumenal segment spans residues 492-518 (YWSSHCATTFKEDGLWTYLNQIVACSP). Residues 519-539 (WVLYILMLATFHFSWSTFLLL) traverse the membrane as a helical segment. The Cytoplasmic portion of the chain corresponds to 540-622 (NQLFQIAFLG…PAREKVLRSV (83 aa)).

Belongs to the DHHC palmitoyltransferase family. AKR/ZDHHC17 subfamily. Interacts (via ANK repeats) with CLIP3. Interacts (via ANK repeats) with DNAJC5 (via C-terminus). Interacts (via ANK repeats) with HTT. Interacts (via ANK repeats) with MAP6. Interacts (via ANK repeats) with SNAP23. Interacts (via ANK repeats) with SNAP25. May interact (via ANK repeats) with SPRED2.

The protein resides in the golgi apparatus membrane. It is found in the cytoplasmic vesicle membrane. The catalysed reaction is L-cysteinyl-[protein] + hexadecanoyl-CoA = S-hexadecanoyl-L-cysteinyl-[protein] + CoA. In terms of biological role, palmitoyltransferase that could catalyze the addition of palmitate onto various protein substrates. Palmitoyltransferase for HTT and GAD2. May play a role in Mg(2+) transport. This chain is Palmitoyltransferase ZDHHC13, found in Pongo abelii (Sumatran orangutan).